Consider the following 119-residue polypeptide: Tubulin-specific chaperone A (119 aa).

Belongs to the TBCA family. As to quaternary structure, supercomplex made of cofactors A to E. Cofactors A and D function by capturing and stabilizing tubulin in a quasi-native conformation. Cofactor E binds to the cofactor D-tubulin complex; interaction with cofactor C then causes the release of tubulin polypeptides that are committed to the native state.

It localises to the cytoplasm. It is found in the cytoskeleton. In terms of biological role, required for the maintenance of microtubule structures and cell polarity. Beta-tubulin-folding protein; may have a regulatory role in the tubulin-folding pathway. The sequence is that of Tubulin-specific chaperone A (alp31) from Schizosaccharomyces pombe (strain 972 / ATCC 24843) (Fission yeast).